Here is a 1071-residue protein sequence, read N- to C-terminus: DNA-directed RNA polymerase subunit beta (1071 aa).

This sequence belongs to the RNA polymerase beta chain family. As to quaternary structure, in plastids the minimal PEP RNA polymerase catalytic core is composed of four subunits: alpha, beta, beta', and beta''. When a (nuclear-encoded) sigma factor is associated with the core the holoenzyme is formed, which can initiate transcription.

The protein resides in the plastid. It is found in the chloroplast. It catalyses the reaction RNA(n) + a ribonucleoside 5'-triphosphate = RNA(n+1) + diphosphate. In terms of biological role, DNA-dependent RNA polymerase catalyzes the transcription of DNA into RNA using the four ribonucleoside triphosphates as substrates. This chain is DNA-directed RNA polymerase subunit beta, found in Adiantum capillus-veneris (Maidenhair fern).